A 1187-amino-acid polypeptide reads, in one-letter code: ATP-dependent DNA helicase MPH1 (1187 aa).

In terms of domain architecture, Helicase ATP-binding spans 144-311 (IVERAFYDNL…QIIDNLNISK (168 aa)). 157–164 (LPTGLGKT) is an ATP binding site. The short motif at 259–262 (DEAH) is the DEAH box element. Positions 486 to 681 (ELDDFFKNHE…FIQLRPQHRM (196 aa)) constitute a Helicase C-terminal domain. 3 disordered regions span residues 542–576 (VENF…MTGM), 781–848 (DKLV…NNQV), and 941–1003 (PEKP…LGVK). The segment covering 547-556 (KKKQKGQTKK) has biased composition (basic residues). A compositionally biased stretch (polar residues) spans 564 to 576 (TRSSSENAQMTGM). Over residues 781–817 (DKLVDSDSESEVDKENENVIQEVDKSKNQEQNDHIIT) the composition is skewed to basic and acidic residues. Over residues 822 to 848 (TEQSVAGNTKSTTNGTSYSEPENNNQV) the composition is skewed to polar residues. A compositionally biased stretch (low complexity) spans 967 to 977 (SNSISIPSSTT). The segment covering 980 to 989 (SHNEVTRKVV) has biased composition (basic and acidic residues).

Belongs to the DEAD box helicase family. DEAH subfamily. FANCM sub-subfamily. As to quaternary structure, interacts with the MHF histone-fold complex to form the FANCM-MHF complex.

It localises to the nucleus. It catalyses the reaction ATP + H2O = ADP + phosphate + H(+). Functionally, ATP-dependent DNA helicase involved in DNA damage repair by homologous recombination and in genome maintenance. Capable of unwinding D-loops. Plays a role in limiting crossover recombinants during mitotic DNA double-strand break (DSB) repair. Component of a FANCM-MHF complex which promotes gene conversion at blocked replication forks, probably by reversal of the stalled fork. The protein is ATP-dependent DNA helicase MPH1 of Candida albicans (strain SC5314 / ATCC MYA-2876) (Yeast).